The sequence spans 326 residues: Dipeptide transport ATP-binding protein DppD (326 aa).

Positions 5-255 (IRVEDLRAVY…PLHPYTRGLI (251 aa)) constitute an ABC transporter domain. Residues 44–49 (ASGKST), asparagine 61, and glutamine 97 contribute to the ATP site. [4Fe-4S] cluster is bound by residues cysteine 285, cysteine 291, cysteine 298, and cysteine 316.

The protein belongs to the ABC transporter superfamily.

It localises to the cell membrane. It catalyses the reaction a dipeptide(out) + ATP + H2O = a dipeptide(in) + ADP + phosphate + H(+). With respect to regulation, the C-terminal iron-sulfur cluster may stabilize the structure of the C-terminal loops and may function in the regulation of the transport process. Part of the ABC transporter Dpp involved in dipeptide transport. Responsible for energy coupling to the transport system. In Caldanaerobacter subterraneus subsp. tengcongensis (strain DSM 15242 / JCM 11007 / NBRC 100824 / MB4) (Thermoanaerobacter tengcongensis), this protein is Dipeptide transport ATP-binding protein DppD.